A 207-amino-acid polypeptide reads, in one-letter code: Prolactin (207 aa).

The signal sequence occupies residues 1-20 (KSRLYFAVTVLMCAFVSING). 2 disulfide bridges follow: cysteine 66-cysteine 180 and cysteine 197-cysteine 207.

This sequence belongs to the somatotropin/prolactin family. In terms of tissue distribution, pituitary gland.

It is found in the secreted. The sequence is that of Prolactin (prl) from Hypophthalmichthys molitrix (Silver carp).